The chain runs to 911 residues: Desmoglein-1-gamma (911 aa).

A signal peptide spans 1 to 23 (MDWHSFRIAALLLTSLVVLEVNS). Positions 24 to 49 (EFQIQVRDHNAKNGTIKWHSIRRQKR) are excised as a propeptide. Cadherin domains follow at residues 50–157 (EWIK…PPVF), 158–269 (SMTT…IPYL), and 270–389 (EQSS…QPGS). At 50-519 (EWIKFAAACR…PNVDNVHFGP (470 aa)) the chain is on the extracellular side. Asn-110 is a glycosylation site (N-linked (GlcNAc...) (high mannose) asparagine). An N-linked (GlcNAc...) asparagine glycan is attached at Asn-180. N-linked (GlcNAc...) asparagine glycosylation occurs at Asn-401. Residues 520 to 540 (AGIGLLIMGFLVLGLVPFLLI) form a helical membrane-spanning segment. Over 541–911 (SCDCGGAPGG…GMIGNLSIPP (371 aa)) the chain is Cytoplasmic. 4 Desmoglein repeat repeats span residues 783 to 809 (AYPS…TVRE), 810 to 839 (SYTT…ERVV), 840 to 869 (GPIS…ERVI), and 870 to 897 (APGS…ERVI). A Desmoglein repeat 5; truncated repeat occupies 898–911 (QPTSGMIGNLSIPP).

In terms of assembly, interacts with DSC3; there is evidence to suggest that the interaction promotes cell-cell adhesion of keratinocytes. In terms of tissue distribution, expressed in epidermis, brain, liver, skeletal, muscle and testis.

The protein resides in the cell membrane. It is found in the cell junction. Its subcellular location is the desmosome. It localises to the cytoplasm. The protein localises to the nucleus. In terms of biological role, component of intercellular desmosome junctions. Involved in the interaction of plaque proteins and intermediate filaments mediating cell-cell adhesion. The protein is Desmoglein-1-gamma (Dsg1c) of Mus musculus (Mouse).